A 178-amino-acid chain; its full sequence is GTP-dependent dephospho-CoA kinase (178 aa).

Positions 55, 57, 74, 76, and 127 each coordinate GTP.

This sequence belongs to the GTP-dependent DPCK family.

The catalysed reaction is 3'-dephospho-CoA + GTP = GDP + CoA + H(+). Its pathway is cofactor biosynthesis; coenzyme A biosynthesis. Functionally, catalyzes the GTP-dependent phosphorylation of the 3'-hydroxyl group of dephosphocoenzyme A to form coenzyme A (CoA). The protein is GTP-dependent dephospho-CoA kinase of Saccharolobus islandicus (strain Y.G.57.14 / Yellowstone #1) (Sulfolobus islandicus).